Here is a 214-residue protein sequence, read N- to C-terminus: Adenylate kinase (214 aa).

10–15 (GAGKGT) is a binding site for ATP. Residues 30–59 (STGDMFRAAIKAGTELGKQAKALMDEGKLV) are NMP. Residues threonine 31, arginine 36, 57–59 (KLV), 85–88 (GFPR), and glutamine 92 contribute to the AMP site. The LID stretch occupies residues 122–159 (GRRVHQASGRSYHIVYNPPKVEGKDDVTGEDLIIRADD). ATP-binding positions include arginine 123 and 132-133 (SY). Residues arginine 156 and arginine 167 each coordinate AMP. Residue glutamine 200 participates in ATP binding.

The protein belongs to the adenylate kinase family. Monomer.

It localises to the cytoplasm. It catalyses the reaction AMP + ATP = 2 ADP. It functions in the pathway purine metabolism; AMP biosynthesis via salvage pathway; AMP from ADP: step 1/1. Its function is as follows. Catalyzes the reversible transfer of the terminal phosphate group between ATP and AMP. Plays an important role in cellular energy homeostasis and in adenine nucleotide metabolism. It may be linked to the biosynthesis of lipopolysaccharide surface molecules, which are important for the pathogenesis of H.influenzae. The chain is Adenylate kinase from Haemophilus influenzae (strain ATCC 51907 / DSM 11121 / KW20 / Rd).